The sequence spans 349 residues: Small ribosomal subunit protein uS2 (349 aa).

The disordered stretch occupies residues 302-334 (QNNYDPSKRGYNPKYVNHKSTFNKFNNKKPVDS).

Belongs to the universal ribosomal protein uS2 family.

The polypeptide is Small ribosomal subunit protein uS2 (Ureaplasma parvum serovar 3 (strain ATCC 27815 / 27 / NCTC 11736)).